We begin with the raw amino-acid sequence, 283 residues long: Bifunctional protein FolD (283 aa).

NADP(+) is bound by residues Gly165–Ser167, Ser190, and Val231.

Belongs to the tetrahydrofolate dehydrogenase/cyclohydrolase family. Homodimer. Interacts with BrxC.

It catalyses the reaction (6R)-5,10-methylene-5,6,7,8-tetrahydrofolate + NADP(+) = (6R)-5,10-methenyltetrahydrofolate + NADPH. The enzyme catalyses (6R)-5,10-methenyltetrahydrofolate + H2O = (6R)-10-formyltetrahydrofolate + H(+). It participates in one-carbon metabolism; tetrahydrofolate interconversion. In terms of biological role, catalyzes the oxidation of 5,10-methylenetetrahydrofolate to 5,10-methenyltetrahydrofolate and then the hydrolysis of 5,10-methenyltetrahydrofolate to 10-formyltetrahydrofolate. The chain is Bifunctional protein FolD from Bacillus subtilis (strain 168).